We begin with the raw amino-acid sequence, 102 residues long: Small ribosomal subunit protein uS10 (102 aa).

It belongs to the universal ribosomal protein uS10 family. As to quaternary structure, part of the 30S ribosomal subunit.

Functionally, involved in the binding of tRNA to the ribosomes. The protein is Small ribosomal subunit protein uS10 of Methanothermobacter thermautotrophicus (strain ATCC 29096 / DSM 1053 / JCM 10044 / NBRC 100330 / Delta H) (Methanobacterium thermoautotrophicum).